A 243-amino-acid chain; its full sequence is Ribosomal RNA small subunit methyltransferase G (243 aa).

S-adenosyl-L-methionine contacts are provided by residues glycine 79, phenylalanine 84, 130–131 (AE), and arginine 150. The interval 222 to 243 (KPTPNKYPRKPGIPNKQPLGGA) is disordered.

The protein belongs to the methyltransferase superfamily. RNA methyltransferase RsmG family.

The protein resides in the cytoplasm. Specifically methylates the N7 position of a guanine in 16S rRNA. The sequence is that of Ribosomal RNA small subunit methyltransferase G from Lacticaseibacillus paracasei (strain ATCC 334 / BCRC 17002 / CCUG 31169 / CIP 107868 / KCTC 3260 / NRRL B-441) (Lactobacillus paracasei).